The sequence spans 428 residues: Serine--tRNA ligase (428 aa).

Residue 235 to 237 coordinates L-serine; the sequence is TAE. 266–268 provides a ligand contact to ATP; that stretch reads RSE. An L-serine-binding site is contributed by E289. 353–356 lines the ATP pocket; the sequence is EISS. S389 serves as a coordination point for L-serine.

It belongs to the class-II aminoacyl-tRNA synthetase family. Type-1 seryl-tRNA synthetase subfamily. In terms of assembly, homodimer. The tRNA molecule binds across the dimer.

Its subcellular location is the cytoplasm. The catalysed reaction is tRNA(Ser) + L-serine + ATP = L-seryl-tRNA(Ser) + AMP + diphosphate + H(+). It catalyses the reaction tRNA(Sec) + L-serine + ATP = L-seryl-tRNA(Sec) + AMP + diphosphate + H(+). It participates in aminoacyl-tRNA biosynthesis; selenocysteinyl-tRNA(Sec) biosynthesis; L-seryl-tRNA(Sec) from L-serine and tRNA(Sec): step 1/1. In terms of biological role, catalyzes the attachment of serine to tRNA(Ser). Is also able to aminoacylate tRNA(Sec) with serine, to form the misacylated tRNA L-seryl-tRNA(Sec), which will be further converted into selenocysteinyl-tRNA(Sec). In Shewanella piezotolerans (strain WP3 / JCM 13877), this protein is Serine--tRNA ligase.